The chain runs to 152 residues: Interleukin-1 family member 10 (152 aa).

This sequence belongs to the IL-1 family. Interacts with cargo receptor TMED10; the interaction mediates the translocation from the cytoplasm into the ERGIC (endoplasmic reticulum-Golgi intermediate compartment) and thereby secretion. Expressed in fetal skin, spleen and tonsil. Expressed mostly in the basal epithelia of skin and in proliferating B-cells of the tonsil.

It localises to the cytoplasm. The protein resides in the secreted. Functionally, cytokine with immunomodulatory activity. Alone, does not induce cytokine production, but reduces IL22 and IL17A production by T-cells in response to heat-killed Candida albicans. Reduces IL36G-induced production of IL8 by peripheral blood mononuclear cells. Increases IL6 production by dendritic cells stimulated by bacterial lipopolysaccharides (LPS). Ligand for IL-36R/IL1RL2. This is Interleukin-1 family member 10 from Homo sapiens (Human).